Consider the following 180-residue polypeptide: Large ribosomal subunit protein uL6 (180 aa).

Belongs to the universal ribosomal protein uL6 family. Part of the 50S ribosomal subunit.

In terms of biological role, this protein binds to the 23S rRNA, and is important in its secondary structure. It is located near the subunit interface in the base of the L7/L12 stalk, and near the tRNA binding site of the peptidyltransferase center. The polypeptide is Large ribosomal subunit protein uL6 (Borrelia turicatae (strain 91E135)).